The following is a 506-amino-acid chain: Protein NEN3 (506 aa).

One can recognise an Exonuclease domain in the interval 15–176 (FFDLETAVPT…LDDVRMNLEV (162 aa)). The Mg(2+) site is built by Asp-17 and Glu-19. His-164 functions as the Proton donor/acceptor in the catalytic mechanism. Residue Asp-169 coordinates Mg(2+). Disordered stretches follow at residues 204–240 (KSPR…SSVD) and 289–313 (AEEA…KDES). Residues 222–238 (SSTSSSSSPKTDPSSSS) show a composition bias toward low complexity. Residues 290 to 299 (EEAKTVRQQD) are compositionally biased toward basic and acidic residues.

Mg(2+) serves as cofactor.

In terms of biological role, probable exonuclease that may be involved in enuclation of sieve elements. This Arabidopsis thaliana (Mouse-ear cress) protein is Protein NEN3 (NEN3).